A 214-amino-acid chain; its full sequence is Thymidylate kinase (214 aa).

10-17 (GPDGAGKT) lines the ATP pocket.

Belongs to the thymidylate kinase family.

The catalysed reaction is dTMP + ATP = dTDP + ADP. Its function is as follows. Phosphorylation of dTMP to form dTDP in both de novo and salvage pathways of dTTP synthesis. In Levilactobacillus brevis (strain ATCC 367 / BCRC 12310 / CIP 105137 / JCM 1170 / LMG 11437 / NCIMB 947 / NCTC 947) (Lactobacillus brevis), this protein is Thymidylate kinase.